The primary structure comprises 242 residues: Carboxy-S-adenosyl-L-methionine synthase (242 aa).

S-adenosyl-L-methionine contacts are provided by residues Tyr38, 63–65 (GCS), 88–89 (DN), 116–117 (DL), and Arg199.

It belongs to the class I-like SAM-binding methyltransferase superfamily. Cx-SAM synthase family. As to quaternary structure, homodimer.

It carries out the reaction prephenate + S-adenosyl-L-methionine = carboxy-S-adenosyl-L-methionine + 3-phenylpyruvate + H2O. In terms of biological role, catalyzes the conversion of S-adenosyl-L-methionine (SAM) to carboxy-S-adenosyl-L-methionine (Cx-SAM). In Methylococcus capsulatus (strain ATCC 33009 / NCIMB 11132 / Bath), this protein is Carboxy-S-adenosyl-L-methionine synthase.